The following is a 220-amino-acid chain: Deoxyribose-phosphate aldolase (220 aa).

Asp89 serves as the catalytic Proton donor/acceptor. The Schiff-base intermediate with acetaldehyde role is filled by Lys151. Residue Lys180 is the Proton donor/acceptor of the active site.

The protein belongs to the DeoC/FbaB aldolase family. DeoC type 1 subfamily.

Its subcellular location is the cytoplasm. The catalysed reaction is 2-deoxy-D-ribose 5-phosphate = D-glyceraldehyde 3-phosphate + acetaldehyde. It functions in the pathway carbohydrate degradation; 2-deoxy-D-ribose 1-phosphate degradation; D-glyceraldehyde 3-phosphate and acetaldehyde from 2-deoxy-alpha-D-ribose 1-phosphate: step 2/2. Functionally, catalyzes a reversible aldol reaction between acetaldehyde and D-glyceraldehyde 3-phosphate to generate 2-deoxy-D-ribose 5-phosphate. The polypeptide is Deoxyribose-phosphate aldolase (Streptococcus pneumoniae serotype 19F (strain G54)).